The following is a 142-amino-acid chain: Ovocleidin-17 (142 aa).

3 disulfide bridges follow: C5/C16, C33/C138, and C113/C130. Residues 12–139 (TPGGCLGFFS…CTERNAFVCK (128 aa)) form the C-type lectin domain. A glycan (N-linked (GlcNAc...) asparagine) is linked at N59. Residues S61 and S67 each carry the phosphoserine modification.

In terms of tissue distribution, expressed in the shell gland mucosa. Not detected in hen liver, magnum, isthmus, cartilage, bone or in egg white or yolk.

The protein localises to the secreted. Its subcellular location is the extracellular space. It localises to the extracellular matrix. Functionally, may form proteinaceous networks during the construction of the eggshell which then may control the deposition of the mineral phase. The chain is Ovocleidin-17 from Gallus gallus (Chicken).